A 446-amino-acid polypeptide reads, in one-letter code: MALLLLRMGVSVALLVAFFSSLIPSSEAYDPLDPNGNITIKWDVLQWTPDGYVAVVSLYNYQQYRHIQSPGWKLGWVWAKKEIIWAMNGGQATEQGDCSKFKSNIPHCCKKDPEIVDLLPGTPYNMQIANCCKGGVLNSWAQDPANAIASFQVSVGQAGTTNKTVRVPRNFTLKSPGPGYTCGSAKVVRPTKFFSQDGRRTTQAHMTWNVTCTYSQIVAQRSPTCCVSLSSFYNDTIVNCPTCSCGCQNNKPGSCVEGNSPYLASVVNTHNKDSLTPLVQCTSHMCPIRVHWHVKVNYKEYWRVKITVTNFNYRMNYSQWNLVTQHPSFDNLTTIFSFNYKSLNPYGVINDTAMLWGIKYYNDLLMTAGPDGNVQSELLFKKDPKSFTFEKGWAFPRRVYFNGDNCVMPPPDAYPWLPNASTRVMSSILLPFITIWTALTFLMVYA.

The N-terminal stretch at 1-28 (MALLLLRMGVSVALLVAFFSSLIPSSEA) is a signal peptide. Asn-37, Asn-162, Asn-170, Asn-209, Asn-234, Asn-316, Asn-331, Asn-350, and Asn-419 each carry an N-linked (GlcNAc...) asparagine glycan. Residue Ala-420 is the site of GPI-anchor amidated alanine attachment. A propeptide spans 421 to 446 (STRVMSSILLPFITIWTALTFLMVYA) (removed in mature form).

The protein belongs to the COBRA family.

Its subcellular location is the cell membrane. Functionally, involved in determining the orientation of cell expansion, probably by playing an important role in cellulose deposition. May act by recruiting cellulose synthesizing complexes to discrete positions on the cell surface. The polypeptide is COBRA-like protein 1 (BC1L6) (Oryza sativa subsp. japonica (Rice)).